We begin with the raw amino-acid sequence, 554 residues long: Terpene synthase 17 (554 aa).

Residues D306, D310, and E458 each contribute to the Mg(2+) site. The short motif at 306–310 is the DDXXD motif element; that stretch reads DDTYD.

Belongs to the terpene synthase family. Tpsa subfamily. Mg(2+) is required as a cofactor. Mn(2+) serves as cofactor.

The enzyme catalyses (2E,6E)-farnesyl diphosphate = (+)-valencene + diphosphate. The catalysed reaction is (2E,6E)-farnesyl diphosphate = (E)-beta-farnesene + diphosphate. It catalyses the reaction (2E,6E)-farnesyl diphosphate = gamma-gurjunene + diphosphate. It carries out the reaction (2Z,6Z)-farnesyl diphosphate = beta-bisabolene + diphosphate. The enzyme catalyses (2Z,6Z)-farnesyl diphosphate = (E)-gamma-bisabolene + diphosphate. The catalysed reaction is (2E)-geranyl diphosphate = limonene + diphosphate. It catalyses the reaction (2E)-geranyl diphosphate = beta-myrcene + diphosphate. It carries out the reaction (2E)-geranyl diphosphate = (E)-beta-ocimene + diphosphate. The enzyme catalyses (2E)-geranyl diphosphate = terpinolene + diphosphate. The catalysed reaction is (2E)-geranyl diphosphate = gamma-terpinene + diphosphate. It catalyses the reaction (2Z,6Z)-farnesyl diphosphate = (Z)-gamma-bisabolene + diphosphate. It carries out the reaction (2E,6E)-farnesyl diphosphate = (1S,5S,6R)-alpha-bergamotene + diphosphate. The enzyme catalyses (2Z,6Z)-farnesyl diphosphate = (1S,5S,6S)-alpha-bergamotene + diphosphate. Its pathway is secondary metabolite biosynthesis; terpenoid biosynthesis. Functionally, sesquiterpene synthase involved in the biosynthesis of volatile compounds. Mediates the conversion of (2E,6E)-farnesyl diphosphate (FPP) into gamma-gurjunene, (E)-beta-farnesene and (+)-valencene, and of (2Z,6Z)-farnesyl diphosphate ((ZZ)-FPP) into (E)-alpha-bergamotene and (Z)-gamma-bisabolene as well as beta-bisabolene, (Z)-alpha-bergamotene and (E)-gamma-bisabolene to a lower extent. Can act with a low efficiency as a monoterpene synthase with geranyl diphosphate (GPP) as substrate, thus producing beta-myrcene, (E)-beta-ocimene, limonene, terpinolene, gamma-terpinene and (Z)-beta-ocimene. The sequence is that of Terpene synthase 17 from Solanum habrochaites (Wild tomato).